We begin with the raw amino-acid sequence, 379 residues long: Carboxypeptidase Y-deficient protein 8 (379 aa).

Low complexity predominate over residues histidine 84–valine 107. A disordered region spans residues histidine 84–aspartate 108. Serine 216 carries the post-translational modification Phosphoserine.

This sequence belongs to the VPS26 family. In terms of assembly, component of the retromer complex which consists of VPS29, VPS26, VPS35, VPS5 and VPS17. Component of a retromer subcomplex consisting of VPS29, VPS26 and VPS35.

Its function is as follows. Plays a role in vesicular protein sorting. Required for the endosome-to-Golgi retrieval of the vacuolar protein sorting receptor VPS10. Component of the membrane-associated retromer complex which is essential in endosome-to-Golgi retrograde transport. The VPS29-VPS26-VPS35 subcomplex may be involved in cargo selection. The polypeptide is Carboxypeptidase Y-deficient protein 8 (PEP8) (Saccharomyces cerevisiae (strain ATCC 204508 / S288c) (Baker's yeast)).